Reading from the N-terminus, the 538-residue chain is Sodium/hydrogen exchanger 1 (538 aa).

The Cytoplasmic portion of the chain corresponds to methionine 1–serine 19. The chain crosses the membrane as a helical span at residues valine 20–leucine 40. Residues glutamate 41 to tryptophan 45 are Vacuolar-facing. The chain crosses the membrane as a helical span at residues methionine 46–isoleucine 66. Residues serine 67–histidine 73 are Cytoplasmic-facing. Positions leucine 74–alanine 94 form an intramembrane region, helical. The Cytoplasmic portion of the chain corresponds to glycine 95 to asparagine 106. Residues phenylalanine 107–leucine 127 form a helical membrane-spanning segment. The Vacuolar portion of the chain corresponds to glycine 128 to tyrosine 146. Intramembrane regions (helical) lie at residues leucine 147–asparagine 166 and leucine 172–phenylalanine 192. The Vacuolar segment spans residues asparagine 193–leucine 216. The helical transmembrane segment at tyrosine 217 to isoleucine 237 threads the bilayer. The Cytoplasmic portion of the chain corresponds to lysine 238 to tyrosine 262. Residues methionine 263–methionine 283 form a helical membrane-spanning segment. Residues serine 284–threonine 302 are Vacuolar-facing. An N-linked (GlcNAc...) asparagine glycan is attached at asparagine 290. Residues phenylalanine 303–leucine 323 traverse the membrane as a helical segment. Residues aspartate 324–serine 342 are Cytoplasmic-facing. Residues serine 343–leucine 363 form a helical membrane-spanning segment. Over serine 364–asparagine 378 the chain is Vacuolar. A glycan (N-linked (GlcNAc...) asparagine) is linked at asparagine 370. A helical transmembrane segment spans residues methionine 379–tyrosine 399. Residues asparagine 400–asparagine 413 lie on the Cytoplasmic side of the membrane. Residues alanine 414–leucine 434 form a helical membrane-spanning segment. Topologically, residues threonine 435–alanine 538 are vacuolar. Asparagine 447 carries an N-linked (GlcNAc...) asparagine glycan. Positions arginine 496–glycine 518 are interaction with CML18/CAM15.

It belongs to the monovalent cation:proton antiporter 1 (CPA1) transporter (TC 2.A.36) family. As to quaternary structure, calcium and pH-dependent interaction with CML18/CAM15 (increases when pH decreases, better at pH 5.5 than at pH 7.5). As to expression, ubiquitous, with higher levels around vascular tissues and guard cells.

It is found in the vacuole membrane. It localises to the endoplasmic reticulum membrane. The protein localises to the golgi apparatus membrane. It carries out the reaction Na(+)(in) + H(+)(out) = Na(+)(out) + H(+)(in). The enzyme catalyses K(+)(in) + H(+)(out) = K(+)(out) + H(+)(in). Acts in low affinity electroneutral exchange of protons for cations such as Na(+) or K(+) across membranes. Can also exchange Li(+) and Cs(+) with a lower affinity. Involved in vacuolar ion compartmentalization necessary for cell volume regulation and cytoplasmic Na(+) detoxification. Required during leaves expansion, probably to stimulate epidermal cell expansion. Confers competence to grow in high salinity conditions. This is Sodium/hydrogen exchanger 1 (NHX1) from Arabidopsis thaliana (Mouse-ear cress).